Consider the following 168-residue polypeptide: Thiol peroxidase (168 aa).

One can recognise a Thioredoxin domain in the interval 19–168; sequence PQAGSKAQAF…YDAALNVLKA (150 aa). Catalysis depends on Cys61, which acts as the Cysteine sulfenic acid (-SOH) intermediate. A disulfide bridge links Cys61 with Cys95.

This sequence belongs to the peroxiredoxin family. Tpx subfamily. Homodimer.

It catalyses the reaction a hydroperoxide + [thioredoxin]-dithiol = an alcohol + [thioredoxin]-disulfide + H2O. Thiol-specific peroxidase that catalyzes the reduction of hydrogen peroxide and organic hydroperoxides to water and alcohols, respectively. Plays a role in cell protection against oxidative stress by detoxifying peroxides. The chain is Thiol peroxidase from Salmonella typhi.